A 485-amino-acid chain; its full sequence is Glutamyl-tRNA(Gln) amidotransferase subunit A (485 aa).

Catalysis depends on charge relay system residues K76 and S151. Catalysis depends on S175, which acts as the Acyl-ester intermediate.

The protein belongs to the amidase family. GatA subfamily. As to quaternary structure, heterotrimer of A, B and C subunits.

It carries out the reaction L-glutamyl-tRNA(Gln) + L-glutamine + ATP + H2O = L-glutaminyl-tRNA(Gln) + L-glutamate + ADP + phosphate + H(+). Its function is as follows. Allows the formation of correctly charged Gln-tRNA(Gln) through the transamidation of misacylated Glu-tRNA(Gln) in organisms which lack glutaminyl-tRNA synthetase. The reaction takes place in the presence of glutamine and ATP through an activated gamma-phospho-Glu-tRNA(Gln). The polypeptide is Glutamyl-tRNA(Gln) amidotransferase subunit A (Pelagibacter ubique (strain HTCC1062)).